We begin with the raw amino-acid sequence, 85 residues long: Large ribosomal subunit protein bL27 (85 aa).

Residues 1–22 (MAHKKGASSTRNGRDSNAQRLG) form a disordered region. Over residues 7–19 (ASSTRNGRDSNAQ) the composition is skewed to polar residues.

It belongs to the bacterial ribosomal protein bL27 family.

The protein is Large ribosomal subunit protein bL27 (rpmA) of Streptomyces griseus.